A 185-amino-acid chain; its full sequence is AP-3 complex subunit sigma (185 aa).

The protein belongs to the adaptor complexes small subunit family. Adaptor protein complex 3 (AP-3) is a heterotetramer composed of 2 large adaptins (APL5 and APL6), a medium adaptin (APM3) and a small adaptin (APS3).

The protein resides in the golgi apparatus. It is found in the cytoplasmic vesicle membrane. Part of the AP-3 complex, an adaptor-related complex which is not clathrin-associated. The complex is associated with the Golgi region as well as more peripheral structures. It facilitates the budding of vesicles from the Golgi membrane and may be directly involved in trafficking to the vacuole. This is AP-3 complex subunit sigma (APS3) from Eremothecium gossypii (strain ATCC 10895 / CBS 109.51 / FGSC 9923 / NRRL Y-1056) (Yeast).